Reading from the N-terminus, the 95-residue chain is Integration host factor subunit beta (95 aa).

The interval 56–95 (RAPRTGRNPKTGETVELDGKHVPHFKPGKELRDRVNESIA) is disordered. Positions 72 to 95 (LDGKHVPHFKPGKELRDRVNESIA) are enriched in basic and acidic residues.

This sequence belongs to the bacterial histone-like protein family. As to quaternary structure, heterodimer of an alpha and a beta chain.

Functionally, this protein is one of the two subunits of integration host factor, a specific DNA-binding protein that functions in genetic recombination as well as in transcriptional and translational control. The chain is Integration host factor subunit beta from Pseudoalteromonas translucida (strain TAC 125).